Reading from the N-terminus, the 225-residue chain is Receptor-transporting protein 2 (225 aa).

At 1–196 (MCTSLTTCEW…RAQAGSGYNF (196 aa)) the chain is on the cytoplasmic side. Residues 52–161 (ASGRFHCSWC…AEFCEACQEG (110 aa)) form a 3CxxC-type zinc finger. A helical membrane pass occupies residues 197–219 (LSLRWCLFWASLCLLVVYLQFSF). Over 220–225 (LSPAFF) the chain is Extracellular.

It belongs to the TMEM7 family. In terms of assembly, interacts with olfactory receptors. As to expression, expressed in circumvallate papillae and testis.

It localises to the cell membrane. Its function is as follows. Specifically promotes functional cell surface expression of olfactory receptors, but not of other GPCRs. In Homo sapiens (Human), this protein is Receptor-transporting protein 2 (RTP2).